The sequence spans 59 residues: UPF0509 protein KPN78578_12530 (59 aa).

The protein belongs to the UPF0509 family.

The polypeptide is UPF0509 protein KPN78578_12530 (Klebsiella pneumoniae subsp. pneumoniae (strain ATCC 700721 / MGH 78578)).